The chain runs to 420 residues: uncharacterized protein (420 aa).

Belongs to the Rv1128c/1148c/1588c/1702c/1945/3466 family.

This is an uncharacterized protein from Mycobacterium tuberculosis (strain CDC 1551 / Oshkosh).